Reading from the N-terminus, the 337-residue chain is Lipoyl synthase (337 aa).

[4Fe-4S] cluster-binding residues include C81, C86, C92, C107, C111, C114, and S323. In terms of domain architecture, Radical SAM core spans 93–312; the sequence is FSHGTATFMI…EDYGNALGFS (220 aa).

The protein belongs to the radical SAM superfamily. Lipoyl synthase family. [4Fe-4S] cluster serves as cofactor.

Its subcellular location is the cytoplasm. It carries out the reaction [[Fe-S] cluster scaffold protein carrying a second [4Fe-4S](2+) cluster] + N(6)-octanoyl-L-lysyl-[protein] + 2 oxidized [2Fe-2S]-[ferredoxin] + 2 S-adenosyl-L-methionine + 4 H(+) = [[Fe-S] cluster scaffold protein] + N(6)-[(R)-dihydrolipoyl]-L-lysyl-[protein] + 4 Fe(3+) + 2 hydrogen sulfide + 2 5'-deoxyadenosine + 2 L-methionine + 2 reduced [2Fe-2S]-[ferredoxin]. It participates in protein modification; protein lipoylation via endogenous pathway; protein N(6)-(lipoyl)lysine from octanoyl-[acyl-carrier-protein]: step 2/2. Catalyzes the radical-mediated insertion of two sulfur atoms into the C-6 and C-8 positions of the octanoyl moiety bound to the lipoyl domains of lipoate-dependent enzymes, thereby converting the octanoylated domains into lipoylated derivatives. The chain is Lipoyl synthase from Xanthomonas campestris pv. campestris (strain B100).